An 819-amino-acid chain; its full sequence is Leucine--tRNA ligase (819 aa).

The 'HIGH' region motif lies at 51 to 61 (PYPSGNLHIGH). The 'KMSKS' region signature appears at 586 to 590 (KMSKS). K589 contributes to the ATP binding site.

The protein belongs to the class-I aminoacyl-tRNA synthetase family.

It is found in the cytoplasm. It carries out the reaction tRNA(Leu) + L-leucine + ATP = L-leucyl-tRNA(Leu) + AMP + diphosphate. This Deinococcus geothermalis (strain DSM 11300 / CIP 105573 / AG-3a) protein is Leucine--tRNA ligase.